The primary structure comprises 355 residues: Cell surface glycoprotein CD200 receptor 1 (355 aa).

The first 26 residues, 1–26 (MPCTWITSDLQLRLILTLFFVAECLS), serve as a signal peptide directing secretion. At 27–267 (AGMEGTKTSN…QGAEIPAHLK (241 aa)) the chain is on the extracellular side. Residues 35 to 55 (SNNSMQQLDNGNHSSVSTTSS) are compositionally biased toward polar residues. Residues 35 to 56 (SNNSMQQLDNGNHSSVSTTSST) are disordered. 3 N-linked (GlcNAc...) asparagine glycosylation sites follow: Asn46, Asn123, and Asn153. 4 cysteine pairs are disulfide-bonded: Cys85–Cys156, Cys108–Cys124, Cys191–Cys241, and Cys210–Cys229. Positions 139 to 257 (PALQVDPVAI…GNKSLSIQLS (119 aa)) constitute an Ig-like C2-type domain. A helical transmembrane segment spans residues 268-288 (NLYITAPIFIILIVVGSIWLL). Residues 289 to 355 (KISGCRKCKL…NLHTIYVPRV (67 aa)) lie on the Cytoplasmic side of the membrane.

It belongs to the CD200R family. In terms of assembly, CD200 and CD200R1 interact via their respective N-terminal Ig-like domains.

The protein resides in the cell membrane. In terms of biological role, inhibitory receptor for the CD200/OX2 cell surface glycoprotein. Limits inflammation by inhibiting the expression of pro-inflammatory molecules including TNF-alpha, interferons, and inducible nitric oxide synthase (iNOS) in response to selected stimuli. The chain is Cell surface glycoprotein CD200 receptor 1 (CD200R1) from Bos taurus (Bovine).